The sequence spans 471 residues: Sulfate adenylyltransferase subunit 1 (471 aa).

The 216-residue stretch at 22–237 (KELLRFLTCG…LESVQITGAK (216 aa)) folds into the tr-type G domain. Residues 31 to 38 (GSVDDGKS) are G1. 31–38 (GSVDDGKS) serves as a coordination point for GTP. The G2 stretch occupies residues 89 to 93 (GITID). The interval 110–113 (DTPG) is G3. GTP-binding positions include 110–114 (DTPGH) and 165–168 (NKMD). Residues 165-168 (NKMD) form a G4 region. A G5 region spans residues 202-204 (SAL).

Belongs to the TRAFAC class translation factor GTPase superfamily. Classic translation factor GTPase family. CysN/NodQ subfamily. Heterodimer composed of CysD, the smaller subunit, and CysN.

It carries out the reaction sulfate + ATP + H(+) = adenosine 5'-phosphosulfate + diphosphate. Its pathway is sulfur metabolism; hydrogen sulfide biosynthesis; sulfite from sulfate: step 1/3. Its function is as follows. With CysD forms the ATP sulfurylase (ATPS) that catalyzes the adenylation of sulfate producing adenosine 5'-phosphosulfate (APS) and diphosphate, the first enzymatic step in sulfur assimilation pathway. APS synthesis involves the formation of a high-energy phosphoric-sulfuric acid anhydride bond driven by GTP hydrolysis by CysN coupled to ATP hydrolysis by CysD. The polypeptide is Sulfate adenylyltransferase subunit 1 (Saccharophagus degradans (strain 2-40 / ATCC 43961 / DSM 17024)).